A 535-amino-acid polypeptide reads, in one-letter code: Bifunctional purine biosynthesis protein PurH (535 aa).

The MGS-like domain occupies 6 to 151 (TRLPIRRALI…KNHKDVAIVV (146 aa)).

This sequence belongs to the PurH family.

The catalysed reaction is (6R)-10-formyltetrahydrofolate + 5-amino-1-(5-phospho-beta-D-ribosyl)imidazole-4-carboxamide = 5-formamido-1-(5-phospho-D-ribosyl)imidazole-4-carboxamide + (6S)-5,6,7,8-tetrahydrofolate. It carries out the reaction IMP + H2O = 5-formamido-1-(5-phospho-D-ribosyl)imidazole-4-carboxamide. It functions in the pathway purine metabolism; IMP biosynthesis via de novo pathway; 5-formamido-1-(5-phospho-D-ribosyl)imidazole-4-carboxamide from 5-amino-1-(5-phospho-D-ribosyl)imidazole-4-carboxamide (10-formyl THF route): step 1/1. The protein operates within purine metabolism; IMP biosynthesis via de novo pathway; IMP from 5-formamido-1-(5-phospho-D-ribosyl)imidazole-4-carboxamide: step 1/1. The protein is Bifunctional purine biosynthesis protein PurH of Pseudomonas fluorescens (strain SBW25).